The sequence spans 236 residues: Small ribosomal subunit protein uS2c (236 aa).

This sequence belongs to the universal ribosomal protein uS2 family.

It localises to the plastid. The protein localises to the chloroplast. In Phalaenopsis aphrodite subsp. formosana (Moth orchid), this protein is Small ribosomal subunit protein uS2c (rps2).